A 69-amino-acid polypeptide reads, in one-letter code: Cytochrome c oxidase subunit 8A, mitochondrial (69 aa).

The transit peptide at methionine 1–lysine 25 directs the protein to the mitochondrion. An SIFI-degron motif is present at residues serine 2–leucine 19. Residues isoleucine 26 to glycine 36 lie on the Mitochondrial matrix side of the membrane. Residues isoleucine 37–serine 60 traverse the membrane as a helical segment. The Mitochondrial intermembrane segment spans residues histidine 61–glutamate 69.

Belongs to the cytochrome c oxidase VIII family. As to quaternary structure, component of the cytochrome c oxidase (complex IV, CIV), a multisubunit enzyme composed of 14 subunits. The complex is composed of a catalytic core of 3 subunits MT-CO1, MT-CO2 and MT-CO3, encoded in the mitochondrial DNA, and 11 supernumerary subunits COX4I, COX5A, COX5B, COX6A, COX6B, COX6C, COX7A, COX7B, COX7C, COX8 and NDUFA4, which are encoded in the nuclear genome. The complex exists as a monomer or a dimer and forms supercomplexes (SCs) in the inner mitochondrial membrane with NADH-ubiquinone oxidoreductase (complex I, CI) and ubiquinol-cytochrome c oxidoreductase (cytochrome b-c1 complex, complex III, CIII), resulting in different assemblies (supercomplex SCI(1)III(2)IV(1) and megacomplex MCI(2)III(2)IV(2)). Post-translationally, in response to mitochondrial stress, the precursor protein is ubiquitinated by the SIFI complex in the cytoplasm before mitochondrial import, leading to its degradation. Within the SIFI complex, UBR4 initiates ubiquitin chain that are further elongated or branched by KCMF1.

Its subcellular location is the mitochondrion inner membrane. The protein operates within energy metabolism; oxidative phosphorylation. Its function is as follows. Component of the cytochrome c oxidase, the last enzyme in the mitochondrial electron transport chain which drives oxidative phosphorylation. The respiratory chain contains 3 multisubunit complexes succinate dehydrogenase (complex II, CII), ubiquinol-cytochrome c oxidoreductase (cytochrome b-c1 complex, complex III, CIII) and cytochrome c oxidase (complex IV, CIV), that cooperate to transfer electrons derived from NADH and succinate to molecular oxygen, creating an electrochemical gradient over the inner membrane that drives transmembrane transport and the ATP synthase. Cytochrome c oxidase is the component of the respiratory chain that catalyzes the reduction of oxygen to water. Electrons originating from reduced cytochrome c in the intermembrane space (IMS) are transferred via the dinuclear copper A center (CU(A)) of subunit 2 and heme A of subunit 1 to the active site in subunit 1, a binuclear center (BNC) formed by heme A3 and copper B (CU(B)). The BNC reduces molecular oxygen to 2 water molecules using 4 electrons from cytochrome c in the IMS and 4 protons from the mitochondrial matrix. This Hylobates agilis (Agile gibbon) protein is Cytochrome c oxidase subunit 8A, mitochondrial (COX8A).